Consider the following 299-residue polypeptide: Protein translocase subunit SecF (299 aa).

6 helical membrane-spanning segments follow: residues 14–34 (VLIVSAVLILVGLIYTFFYHG), 142–162 (IFLVLGTFILILIYITLRFKL), 166–186 (IASILSIFHDIFFIVAFLGVF), 193–213 (YIIVAILTIIGYSLNDTIIIF), 245–265 (LTSVTTFVAVFSIYVFTEGSI), and 270–290 (LVFMVGVIVGTYSSVFIASPI).

This sequence belongs to the SecD/SecF family. SecF subfamily. In terms of assembly, forms a complex with SecD. Part of the essential Sec protein translocation apparatus which comprises SecA, SecYEG and auxiliary proteins SecDF. Other proteins may also be involved.

The protein resides in the cell inner membrane. In terms of biological role, part of the Sec protein translocase complex. Interacts with the SecYEG preprotein conducting channel. SecDF uses the proton motive force (PMF) to complete protein translocation after the ATP-dependent function of SecA. This is Protein translocase subunit SecF from Borreliella burgdorferi (strain ATCC 35210 / DSM 4680 / CIP 102532 / B31) (Borrelia burgdorferi).